We begin with the raw amino-acid sequence, 432 residues long: Adenylosuccinate synthetase (432 aa).

GTP contacts are provided by residues Gly13–Lys19 and Gly41–Thr43. Asp14 (proton acceptor) is an active-site residue. Residues Asp14 and Gly41 each coordinate Mg(2+). IMP contacts are provided by residues Asp14–Lys17, Asn39–His42, Thr130, Arg144, Gln225, Thr240, and Arg304. The Proton donor role is filled by His42. Substrate is bound at residue Ala300–Arg306. GTP contacts are provided by residues Arg306, Lys332–Asp334, and Ser415–Gly417.

This sequence belongs to the adenylosuccinate synthetase family. Homodimer. Mg(2+) serves as cofactor.

The protein resides in the cytoplasm. The catalysed reaction is IMP + L-aspartate + GTP = N(6)-(1,2-dicarboxyethyl)-AMP + GDP + phosphate + 2 H(+). It participates in purine metabolism; AMP biosynthesis via de novo pathway; AMP from IMP: step 1/2. Functionally, plays an important role in the de novo pathway of purine nucleotide biosynthesis. Catalyzes the first committed step in the biosynthesis of AMP from IMP. In Serratia proteamaculans (strain 568), this protein is Adenylosuccinate synthetase.